Consider the following 554-residue polypeptide: Asparagine--tRNA ligase, cytoplasmic (554 aa).

This sequence belongs to the class-II aminoacyl-tRNA synthetase family.

Its subcellular location is the cytoplasm. It is found in the cytosol. It catalyses the reaction tRNA(Asn) + L-asparagine + ATP = L-asparaginyl-tRNA(Asn) + AMP + diphosphate + H(+). In terms of biological role, catalyzes the attachment of asparagine to tRNA(Asn) in a two-step reaction: asparagine is first activated by ATP to form Asn-AMP and then transferred to the acceptor end of tRNA(Asn). The protein is Asparagine--tRNA ligase, cytoplasmic of Saccharomyces cerevisiae (strain ATCC 204508 / S288c) (Baker's yeast).